We begin with the raw amino-acid sequence, 40 residues long: Amyloid-beta precursor protein (40 aa).

The protein belongs to the APP family. In terms of assembly, binds, via its C-terminus, to the PID domain of several cytoplasmic proteins, including APBB family members, the APBA family, MAPK8IP1, SHC1 and NUMB and DAB1. Binding to DAB1 inhibits its serine phosphorylation. Interacts (via NPXY motif) with DAB2 (via PID domain); the interaction is impaired by tyrosine phosphorylation of the NPXY motif. Also interacts with GPCR-like protein BPP, APPBP1, IB1, KNS2 (via its TPR domains), APPBP2 (via BaSS) and DDB1. In vitro, it binds MAPT via the MT-binding domains. Associates with microtubules in the presence of ATP and in a kinesin-dependent manner. Interacts, through a C-terminal domain, with GNAO1. Interacts with CPEB1, ANKS1B and AGER. Interacts with ITM2B. Interacts with ITM2C. Interacts with IDE. Can form homodimers; dimerization is enhanced in the presence of Cu(2+) ions. Can form homodimers; this is promoted by heparin binding. Interacts with SORL1 (via N-terminal ectodomain); this interaction retains APP in the trans-Golgi network and reduces processing into soluble APP-alpha and amyloid-beta peptides. Interacts with PLD3. Interacts with VDAC1. Interacts with NSG1; could regulate APP processing. Interacts with LRRK2. Interacts (via cytoplasmic domain) with KIF5B. Interacts (via C-terminus) with APBB2/FE65L1 (via C-terminus). Interacts (via intracellular domain) with APBB3. Proteolytically processed under normal cellular conditions. Cleavage either by alpha-secretase, beta-secretase or theta-secretase leads to generation and extracellular release of soluble APP peptides, S-APP-alpha and S-APP-beta, and the retention of corresponding membrane-anchored C-terminal fragments, C80, C83 and C99. Subsequent processing of C80 and C83 by gamma-secretase yields P3 peptides. This is the major secretory pathway and is non-amyloidogenic. Alternatively, presenilin/nicastrin-mediated gamma-secretase processing of C99 releases the amyloid-beta proteins, amyloid-beta protein 40 and amyloid-beta protein 42, major components of amyloid plaques, and the cytotoxic C-terminal fragments, gamma-CTF(50), gamma-CTF(57) and gamma-CTF(59). PSEN1 cleavage is more efficient with C83 than with C99 as substrate (in vitro). Amyloid-beta protein 40 and Amyloid-beta protein 42 are cleaved by ACE. Many other minor amyloid-beta peptides, amyloid-beta 1-X peptides, are found in cerebral spinal fluid (CSF) including the amyloid-beta X-15 peptides, produced from the cleavage by alpha-secretase.

It is found in the cell membrane. The protein resides in the membrane. Its subcellular location is the perikaryon. It localises to the cell projection. The protein localises to the growth cone. It is found in the clathrin-coated pit. The protein resides in the early endosome. Its subcellular location is the cytoplasmic vesicle. Functionally, functions as a cell surface receptor and performs physiological functions on the surface of neurons relevant to neurite growth, neuronal adhesion and axonogenesis. Interaction between APP molecules on neighboring cells promotes synaptogenesis. Involved in cell mobility and transcription regulation through protein-protein interactions. Can promote transcription activation through binding to APBB1-KAT5 and inhibit Notch signaling through interaction with Numb. Couples to apoptosis-inducing pathways such as those mediated by G(o) and JIP. Inhibits G(o)-alpha ATPase activity. Acts as a kinesin I membrane receptor, mediating the axonal transport of beta-secretase and presenilin 1. May be involved in copper homeostasis/oxidative stress through copper ion reduction. In vitro, copper-metallated APP induces neuronal death directly or is potentiated through Cu(2+)-mediated low-density lipoprotein oxidation. Can regulate neurite outgrowth through binding to components of the extracellular matrix such as heparin and collagen I and IV. Induces a AGER-dependent pathway that involves activation of p38 MAPK, resulting in internalization of amyloid-beta peptide and mitochondrial dysfunction in cultured cortical neurons. Provides Cu(2+) ions for GPC1 which are required for release of nitric oxide (NO) and subsequent degradation of the heparan sulfate chains on GPC1. In Felis catus (Cat), this protein is Amyloid-beta precursor protein.